Here is a 144-residue protein sequence, read N- to C-terminus: UPF0179 protein PF1381 (144 aa).

This sequence belongs to the UPF0179 family.

The chain is UPF0179 protein PF1381 from Pyrococcus furiosus (strain ATCC 43587 / DSM 3638 / JCM 8422 / Vc1).